The chain runs to 378 residues: Chaperone protein DnaJ (378 aa).

The J domain maps to 5–69 (EFYDRLGVSK…QKRAAYDQYG (65 aa)). Residues 135-217 (GTEKEVKYHR…CHGTGHEKQA (83 aa)) form a CR-type zinc finger. Zn(2+) contacts are provided by cysteine 148, cysteine 151, cysteine 165, cysteine 168, cysteine 191, cysteine 194, cysteine 205, and cysteine 208. CXXCXGXG motif repeat units lie at residues 148–155 (CRTCNGSG), 165–172 (CGRCHGAG), 191–198 (CDVCHGRG), and 205–212 (CTTCHGTG).

Belongs to the DnaJ family. In terms of assembly, homodimer. Requires Zn(2+) as cofactor.

Its subcellular location is the cytoplasm. In terms of biological role, participates actively in the response to hyperosmotic and heat shock by preventing the aggregation of stress-denatured proteins and by disaggregating proteins, also in an autonomous, DnaK-independent fashion. Unfolded proteins bind initially to DnaJ; upon interaction with the DnaJ-bound protein, DnaK hydrolyzes its bound ATP, resulting in the formation of a stable complex. GrpE releases ADP from DnaK; ATP binding to DnaK triggers the release of the substrate protein, thus completing the reaction cycle. Several rounds of ATP-dependent interactions between DnaJ, DnaK and GrpE are required for fully efficient folding. Also involved, together with DnaK and GrpE, in the DNA replication of plasmids through activation of initiation proteins. The polypeptide is Chaperone protein DnaJ (Streptococcus pneumoniae serotype 4 (strain ATCC BAA-334 / TIGR4)).